The primary structure comprises 138 residues: 1,4-dihydroxy-2-naphthoyl-CoA hydrolase (138 aa).

The active site involves Asp-14.

Belongs to the 4-hydroxybenzoyl-CoA thioesterase family. DHNA-CoA hydrolase subfamily.

The catalysed reaction is 1,4-dihydroxy-2-naphthoyl-CoA + H2O = 1,4-dihydroxy-2-naphthoate + CoA + H(+). The protein operates within cofactor biosynthesis; phylloquinone biosynthesis. It participates in quinol/quinone metabolism; 1,4-dihydroxy-2-naphthoate biosynthesis; 1,4-dihydroxy-2-naphthoate from chorismate: step 7/7. Its function is as follows. Catalyzes the hydrolysis of 1,4-dihydroxy-2-naphthoyl-CoA (DHNA-CoA) to 1,4-dihydroxy-2-naphthoate (DHNA), a reaction involved in phylloquinone (vitamin K1) biosynthesis. The sequence is that of 1,4-dihydroxy-2-naphthoyl-CoA hydrolase from Rippkaea orientalis (strain PCC 8801 / RF-1) (Cyanothece sp. (strain PCC 8801)).